Here is a 325-residue protein sequence, read N- to C-terminus: Short chain isoprenyl diphosphate synthase (325 aa).

Isopentenyl diphosphate is bound by residues Lys-44, Arg-47, and His-76. Asp-83 and Asp-87 together coordinate Mg(2+). Arg-92 is an an all-trans-polyprenyl diphosphate binding site. Residue Arg-93 participates in isopentenyl diphosphate binding. 5 residues coordinate an all-trans-polyprenyl diphosphate: Lys-173, Thr-174, Gln-211, Lys-228, and Lys-238.

Belongs to the FPP/GGPP synthase family. Homodimer. Requires Mg(2+) as cofactor.

The protein resides in the cytoplasm. In Methanothermobacter thermautotrophicus (strain ATCC 29096 / DSM 1053 / JCM 10044 / NBRC 100330 / Delta H) (Methanobacterium thermoautotrophicum), this protein is Short chain isoprenyl diphosphate synthase (idsA).